A 635-amino-acid chain; its full sequence is tRNA 5-methylaminomethyl-2-thiouridine biosynthesis bifunctional protein MnmC (635 aa).

The tRNA (mnm(5)s(2)U34)-methyltransferase stretch occupies residues 1-227 (MSEPIDWLPD…KRSNLQAEFD (227 aa)). Positions 254 to 635 (IGGGLSGAAV…ALSTERLPAD (382 aa)) are FAD-dependent cmnm(5)s(2)U34 oxidoreductase.

It in the N-terminal section; belongs to the methyltransferase superfamily. tRNA (mnm(5)s(2)U34)-methyltransferase family. This sequence in the C-terminal section; belongs to the DAO family. FAD serves as cofactor.

Its subcellular location is the cytoplasm. The catalysed reaction is 5-aminomethyl-2-thiouridine(34) in tRNA + S-adenosyl-L-methionine = 5-methylaminomethyl-2-thiouridine(34) in tRNA + S-adenosyl-L-homocysteine + H(+). In terms of biological role, catalyzes the last two steps in the biosynthesis of 5-methylaminomethyl-2-thiouridine (mnm(5)s(2)U) at the wobble position (U34) in tRNA. Catalyzes the FAD-dependent demodification of cmnm(5)s(2)U34 to nm(5)s(2)U34, followed by the transfer of a methyl group from S-adenosyl-L-methionine to nm(5)s(2)U34, to form mnm(5)s(2)U34. This is tRNA 5-methylaminomethyl-2-thiouridine biosynthesis bifunctional protein MnmC from Paracidovorax citrulli (strain AAC00-1) (Acidovorax citrulli).